A 111-amino-acid chain; its full sequence is Nucleoid-associated protein Clim_0875 (111 aa).

The protein belongs to the YbaB/EbfC family. Homodimer.

It is found in the cytoplasm. It localises to the nucleoid. In terms of biological role, binds to DNA and alters its conformation. May be involved in regulation of gene expression, nucleoid organization and DNA protection. This chain is Nucleoid-associated protein Clim_0875, found in Chlorobium limicola (strain DSM 245 / NBRC 103803 / 6330).